The sequence spans 49 residues: uncharacterized protein (49 aa).

This is an uncharacterized protein from Sulfolobus islandicus filamentous virus (isolate Iceland/Hveragerdi) (SIFV).